The following is a 466-amino-acid chain: Arginine biosynthesis bifunctional protein ArgJ, mitochondrial (466 aa).

Residues threonine 194, lysine 223, threonine 234, glutamate 321, asparagine 461, and threonine 466 each coordinate substrate. Threonine 234 (nucleophile) is an active-site residue.

It belongs to the ArgJ family. In terms of assembly, heterodimer of an alpha and a beta chain. Post-translationally, the alpha and beta chains are autoproteolytically processed from a single precursor protein within the mitochondrion.

It localises to the mitochondrion matrix. It catalyses the reaction N(2)-acetyl-L-ornithine + L-glutamate = N-acetyl-L-glutamate + L-ornithine. The enzyme catalyses L-glutamate + acetyl-CoA = N-acetyl-L-glutamate + CoA + H(+). It participates in amino-acid biosynthesis; L-arginine biosynthesis; L-ornithine and N-acetyl-L-glutamate from L-glutamate and N(2)-acetyl-L-ornithine (cyclic): step 1/1. Its pathway is amino-acid biosynthesis; L-arginine biosynthesis; N(2)-acetyl-L-ornithine from L-glutamate: step 1/4. Its function is as follows. Catalyzes two activities which are involved in the cyclic version of arginine biosynthesis: the synthesis of acetylglutamate from glutamate and acetyl-CoA, and of ornithine by transacetylation between acetylornithine and glutamate. In Aspergillus flavus (strain ATCC 200026 / FGSC A1120 / IAM 13836 / NRRL 3357 / JCM 12722 / SRRC 167), this protein is Arginine biosynthesis bifunctional protein ArgJ, mitochondrial.